Reading from the N-terminus, the 119-residue chain is Large ribosomal subunit protein uL18 (119 aa).

It belongs to the universal ribosomal protein uL18 family. As to quaternary structure, part of the 50S ribosomal subunit; part of the 5S rRNA/L5/L18/L25 subcomplex. Contacts the 5S and 23S rRNAs.

Functionally, this is one of the proteins that bind and probably mediate the attachment of the 5S RNA into the large ribosomal subunit, where it forms part of the central protuberance. In Clostridium botulinum (strain Alaska E43 / Type E3), this protein is Large ribosomal subunit protein uL18.